The sequence spans 237 residues: Probable Bax inhibitor 1 (237 aa).

Residues 1–29 (MNVFDRNINFDSLFKFSQISHSTQVHLKN) lie on the Cytoplasmic side of the membrane. Residues 30 to 50 (VYSSLAVCMFVAAAGSYVHVV) traverse the membrane as a helical segment. The Lumenal segment spans residues 51 to 52 (TR). Residues 53-73 (LFQGGMLSVLGSLGMMFWLAM) traverse the membrane as a helical segment. Over 74–86 (TPHNSETEKKRLA) the chain is Cytoplasmic. The chain crosses the membrane as a helical span at residues 87-107 (ILAGFAFLTGVGLCPTLDFVI). Over 108 to 112 (AINPS) the chain is Lumenal. Residues 113 to 133 (IIVTAFLGTSVIFVCFTLSAL) form a helical membrane-spanning segment. The Cytoplasmic segment spans residues 134-139 (YAKRRS). A helical transmembrane segment spans residues 140-160 (YLFLGGTLMSGLSILFLMSMM). The Lumenal portion of the chain corresponds to 161-166 (NMFFGS). A helical membrane pass occupies residues 167 to 187 (VMLFKAHMYLGLLIMCGFVLX). Over 188–206 (DTQLIIEKAENGDKDYVWH) the chain is Cytoplasmic. An intramembrane region (helical) is located at residues 207 to 227 (SVDLFLDFITIFRKLMVILAL). The Cytoplasmic segment spans residues 228–237 (NDKDKKKEKK).

This sequence belongs to the BI1 family. As to expression, highly abundant in testis.

The protein resides in the endoplasmic reticulum membrane. Its function is as follows. Suppressor of apoptosis. Modulates unfolded protein response signaling. Modulate ER calcium homeostasis by acting as a calcium-leak channel. The chain is Probable Bax inhibitor 1 (tmbim6) from Paralichthys olivaceus (Bastard halibut).